The following is a 376-amino-acid chain: Putative F-box only protein 9 (376 aa).

An F-box domain is found at 1-44 (MSDLPPDLVEDILSRVPATSLKRLRFTCKQWNSLFKNRRFTEKH).

The chain is Putative F-box only protein 9 (FBX9) from Arabidopsis thaliana (Mouse-ear cress).